The primary structure comprises 252 residues: Zinc import ATP-binding protein ZnuC (252 aa).

The 216-residue stretch at 5–220 (VTLNKISVTF…PEFIAMFGQR (216 aa)) folds into the ABC transporter domain. 37 to 44 (GPNGAGKS) contacts ATP.

This sequence belongs to the ABC transporter superfamily. Zinc importer (TC 3.A.1.15.5) family. The complex is composed of two ATP-binding proteins (ZnuC), two transmembrane proteins (ZnuB) and a solute-binding protein (ZnuA).

It localises to the cell inner membrane. It carries out the reaction Zn(2+)(out) + ATP(in) + H2O(in) = Zn(2+)(in) + ADP(in) + phosphate(in) + H(+)(in). Functionally, part of the ABC transporter complex ZnuABC involved in zinc import. Responsible for energy coupling to the transport system. This chain is Zinc import ATP-binding protein ZnuC, found in Yersinia enterocolitica serotype O:8 / biotype 1B (strain NCTC 13174 / 8081).